A 331-amino-acid chain; its full sequence is PTS-dependent dihydroxyacetone kinase 2, dihydroxyacetone-binding subunit DhaK (331 aa).

The DhaK domain occupies aspartate 7 to phenylalanine 328. Residues glycine 55–histidine 58 and aspartate 111 contribute to the dihydroxyacetone site. Catalysis depends on histidine 58, which acts as the Proton acceptor. The active-site Tele-hemiaminal-histidine intermediate is histidine 218.

In terms of assembly, homodimer. The dihydroxyacetone kinase complex is composed of a homodimer of DhaM, a homodimer of DhaK and the subunit DhaL.

It localises to the cytoplasm. It carries out the reaction dihydroxyacetone + phosphoenolpyruvate = dihydroxyacetone phosphate + pyruvate. The protein operates within polyol metabolism; glycerol degradation. Dihydroxyacetone binding subunit of the dihydroxyacetone kinase, which is responsible for the phosphoenolpyruvate (PEP)-dependent phosphorylation of dihydroxyacetone via a phosphoryl group transfer from DhaL-ATP. The polypeptide is PTS-dependent dihydroxyacetone kinase 2, dihydroxyacetone-binding subunit DhaK (Listeria innocua serovar 6a (strain ATCC BAA-680 / CLIP 11262)).